Consider the following 302-residue polypeptide: N-acetyl-D-glucosamine kinase (302 aa).

Residues 4-11 (GFDVGGTK) and 133-140 (GFGGGFIY) contribute to the ATP site. The Zn(2+) site is built by histidine 157, cysteine 177, cysteine 179, and cysteine 184.

The protein belongs to the ROK (NagC/XylR) family. NagK subfamily.

The catalysed reaction is N-acetyl-D-glucosamine + ATP = N-acetyl-D-glucosamine 6-phosphate + ADP + H(+). Its pathway is cell wall biogenesis; peptidoglycan recycling. Catalyzes the phosphorylation of N-acetyl-D-glucosamine (GlcNAc) derived from cell-wall degradation, yielding GlcNAc-6-P. This is N-acetyl-D-glucosamine kinase from Vibrio parahaemolyticus serotype O3:K6 (strain RIMD 2210633).